Reading from the N-terminus, the 318-residue chain is MANQDQAYLDLLKKIMTEGNDKNDRTGTGTRSLFGAQMRFDLSQGFPILTTKRVPFGLIKSELLWFLRGDTNIRFLLEHKNHIWDEWAFKNWVTSPEYQGPDMTDFGLRSQKDPGFKAVYDEEMQKFCQRILDDEAFAQKYGNLGDVYGAQWRHWGKRDGGFIDQIADVIEQIKTNPDSRRLIVTAWNPEDVPSSALPPCHVLFQFYVADGKLSLQLYQRSGDMFLGVPFNIASYSLLLSLIARETGLEVGEFVHTIGDAHIYKNHFAQVEEQLKRKPFDAPTLWLNPGKKKVADFEMADIKLVNYQHGSTIKAPVAV.

DUMP is bound by residues Arg-25 and 180-181; that span reads RR. The Nucleophile role is filled by Cys-200. DUMP-binding positions include 220 to 223, Asn-231, and 261 to 263; these read RSGD and HIY. Asp-223 lines the (6R)-5,10-methylene-5,6,7,8-tetrahydrofolate pocket. Ala-317 lines the (6R)-5,10-methylene-5,6,7,8-tetrahydrofolate pocket.

It belongs to the thymidylate synthase family. Bacterial-type ThyA subfamily. Homodimer.

It localises to the cytoplasm. It carries out the reaction dUMP + (6R)-5,10-methylene-5,6,7,8-tetrahydrofolate = 7,8-dihydrofolate + dTMP. The protein operates within pyrimidine metabolism; dTTP biosynthesis. In terms of biological role, catalyzes the reductive methylation of 2'-deoxyuridine-5'-monophosphate (dUMP) to 2'-deoxythymidine-5'-monophosphate (dTMP) while utilizing 5,10-methylenetetrahydrofolate (mTHF) as the methyl donor and reductant in the reaction, yielding dihydrofolate (DHF) as a by-product. This enzymatic reaction provides an intracellular de novo source of dTMP, an essential precursor for DNA biosynthesis. The sequence is that of Thymidylate synthase from Lactobacillus delbrueckii subsp. bulgaricus (strain ATCC BAA-365 / Lb-18).